The sequence spans 159 residues: NPLLATSIINTGSSISARSQDGLGNYAFNYGIGNGLGATNSRAEFGDAAGNKKGSYTITDIDGRARRVDYVADAAGFRASIKTNEPGTALSAPAAAAIVSPYAPPVAPVAPAVAAPVVAAAPALAGAHLLAAPGISSYSSVIGHGAGLYAPGIAKTIFW.

One can recognise a Chitin-binding type R&amp;R domain in the interval 23 to 89 (LGNYAFNYGI…SIKTNEPGTA (67 aa)).

Functionally, component of the rigid cuticle of the spider. This Araneus diadematus (European garden spider) protein is Adult-specific rigid cuticular protein 15.7.